The following is a 230-amino-acid chain: Large ribosomal subunit protein uL1 (230 aa).

This sequence belongs to the universal ribosomal protein uL1 family. Part of the 50S ribosomal subunit.

Binds directly to 23S rRNA. The L1 stalk is quite mobile in the ribosome, and is involved in E site tRNA release. Functionally, protein L1 is also a translational repressor protein, it controls the translation of the L11 operon by binding to its mRNA. In Rubrobacter xylanophilus (strain DSM 9941 / JCM 11954 / NBRC 16129 / PRD-1), this protein is Large ribosomal subunit protein uL1.